The sequence spans 483 residues: ATP synthase subunit beta (483 aa).

Residue G168–T175 coordinates ATP.

It belongs to the ATPase alpha/beta chains family. In terms of assembly, F-type ATPases have 2 components, CF(1) - the catalytic core - and CF(0) - the membrane proton channel. CF(1) has five subunits: alpha(3), beta(3), gamma(1), delta(1), epsilon(1). CF(0) has three main subunits: a(1), b(2) and c(9-12). The alpha and beta chains form an alternating ring which encloses part of the gamma chain. CF(1) is attached to CF(0) by a central stalk formed by the gamma and epsilon chains, while a peripheral stalk is formed by the delta and b chains.

It is found in the cell membrane. It carries out the reaction ATP + H2O + 4 H(+)(in) = ADP + phosphate + 5 H(+)(out). Produces ATP from ADP in the presence of a proton gradient across the membrane. The catalytic sites are hosted primarily by the beta subunits. This is ATP synthase subunit beta from Mycobacterium ulcerans (strain Agy99).